Consider the following 23-residue polypeptide: Potassium channel toxin kappa-KTx 1.3 (23 aa).

Disulfide bonds link Cys-4/Cys-22 and Cys-8/Cys-18.

This sequence belongs to the short scorpion toxin superfamily. Potassium channel inhibitor kappa-KTx family. Kappa-KTx 1 subfamily. As to quaternary structure, monomer. In terms of processing, is not amidated. In terms of tissue distribution, expressed by the venom gland.

The protein localises to the secreted. Functionally, shows very weak blocking activity on voltage-gated potassium channels Kv10.1/KCNH1/EAG1 (6.2% inhibition by 40 uM of the toxin). Has no effect on the other voltage-gated potassium channels tested. The polypeptide is Potassium channel toxin kappa-KTx 1.3 (Heterometrus spinifer (Asia giant forest scorpion)).